We begin with the raw amino-acid sequence, 549 residues long: MKNINPTQTSAWQALQKHFDEMKDVTISELFAKDSDRFSKFSATFDDLMLVDFSKNRITEETLAKLQDLAKETDLAGAIKSMFSGEKINRTEDRAVLHVALRNRSNTPIVVDGKDVMPEVNAVLEKMKTFSEAIISGSWKGYTGKPITDVVNIGIGGSDLGPFMVTEALRPYKNHLNMHFVSNVDGTHIAEVLKNVNPETTLFLVASKTFTTQETMTNAHSARDWFLATAGDDKHVAKHFAALSTNAKAVGEFGIDTANMFEFWDWVGGRYSLWSAIGLSIILSVGFDNFVELLSGAHAMDKHFSTTPAEKNLPVLLALIGIWYNNFFGAETEAILPYDQYMHRFAAYFQQGNMESNGKYVDRNGHAVDYQTGPIIWGEPGTNGQHAFYQLIHQGTKMVPCDFIAPAITHNPLSDHHQKLLSNFFAQTEALAFGKSREVVEQEYRDQGKDPATLEHVVPFKVFEGNRPTNSILLREITPFSLGALIALYEHKIFTQGAILNIFTFDQWGVELGKQLANRILPELKDGSEVSSHDSSTNGLINRYKAWRA.

Glu-355 acts as the Proton donor in catalysis. Catalysis depends on residues His-386 and Lys-514.

Belongs to the GPI family.

The protein localises to the cytoplasm. The catalysed reaction is alpha-D-glucose 6-phosphate = beta-D-fructose 6-phosphate. Its pathway is carbohydrate biosynthesis; gluconeogenesis. It participates in carbohydrate degradation; glycolysis; D-glyceraldehyde 3-phosphate and glycerone phosphate from D-glucose: step 2/4. Its function is as follows. Catalyzes the reversible isomerization of glucose-6-phosphate to fructose-6-phosphate. In Klebsiella pneumoniae subsp. pneumoniae (strain ATCC 700721 / MGH 78578), this protein is Glucose-6-phosphate isomerase.